Here is a 307-residue protein sequence, read N- to C-terminus: Type 2A encapsulin shell protein (307 aa).

The protein belongs to the encapsulin family. Family 2A subfamily. The encapsulin nanocompartment is formed by 60 subunits; monomers form pentamers which assemble to form shells. There are 12 charged pores where the pentamers meet as well as 3-fold axis channels and dimer channels. Isolated from bacteria in a complex with cysteine desulfurase (AC Q9KII6).

It is found in the encapsulin nanocompartment. Its subcellular location is the cell membrane. Shell component of a type 2A encapsulin nanocompartment. Forms encapsulin nanocompartments about 24 nm in diameter from 60 monomers, probably involved in sulfur metabolism. Probably encapsulates cysteine desulfurase. The polypeptide is Type 2A encapsulin shell protein (Mycolicibacterium paratuberculosis (strain ATCC BAA-968 / K-10) (Mycobacterium paratuberculosis)).